The chain runs to 157 residues: Protein Smg (157 aa).

Belongs to the Smg family.

The polypeptide is Protein Smg (Buchnera aphidicola subsp. Acyrthosiphon pisum (strain Tuc7)).